The primary structure comprises 87 residues: MSASEQGPKIKYGESAPKLDKAQLQFMKLIEEQNLDRVQKLKRIRRNNLLTAGALGVSVLAIYGYSIFSVQQEKFLDDFEEPKKVSS.

A helical transmembrane segment spans residues 47-69 (NNLLTAGALGVSVLAIYGYSIFS).

The protein belongs to the COA3 family.

It localises to the mitochondrion membrane. Its function is as follows. Plays a critical role in the biogenesis and activity of cytochrome c oxidase (COX) (complex IV). The sequence is that of Cytochrome c oxidase assembly factor 3, mitochondrial (Ccdc56) from Drosophila melanogaster (Fruit fly).